A 63-amino-acid chain; its full sequence is Large ribosomal subunit protein uL29 (63 aa).

Belongs to the universal ribosomal protein uL29 family.

The protein is Large ribosomal subunit protein uL29 of Caulobacter vibrioides (strain ATCC 19089 / CIP 103742 / CB 15) (Caulobacter crescentus).